A 326-amino-acid chain; its full sequence is MTKYAKIIGTGSYLPPRRVTNHELAAQLAEKGIETSDEWIVSRSGISARHWAEPDVTSSTLAVKAAEQAIEAAGIDRQDIDLIIVATSTPDFVFPSTACIVQEKLGITNHCPAFDLQAVCSGFVYALATADKFIRSGSHRNVLVIGTEVFSRILDFNDRTTCVLFGDGAGAVVLSASDEPGILSSAMHSDGSHVDILCVPGNVAGGNITGNPFLHMDGQAVFKLAVNVLDKVAREAMEAASVSPDQVDWLIPHQANIRIMQGTAKKLGLPAERMVATVHEHGNTSAASIPLALDVAVRDGRIRPGHTVLMEGVGGGFTWGAVLLRM.

Active-site residues include Cys-120 and His-253. The tract at residues 254-258 (QANIR) is ACP-binding. Asn-283 is a catalytic residue.

The protein belongs to the thiolase-like superfamily. FabH family. As to quaternary structure, homodimer.

It localises to the cytoplasm. It catalyses the reaction malonyl-[ACP] + acetyl-CoA + H(+) = 3-oxobutanoyl-[ACP] + CO2 + CoA. It participates in lipid metabolism; fatty acid biosynthesis. Its function is as follows. Catalyzes the condensation reaction of fatty acid synthesis by the addition to an acyl acceptor of two carbons from malonyl-ACP. Catalyzes the first condensation reaction which initiates fatty acid synthesis and may therefore play a role in governing the total rate of fatty acid production. Possesses both acetoacetyl-ACP synthase and acetyl transacylase activities. Its substrate specificity determines the biosynthesis of branched-chain and/or straight-chain of fatty acids. In Cupriavidus taiwanensis (strain DSM 17343 / BCRC 17206 / CCUG 44338 / CIP 107171 / LMG 19424 / R1) (Ralstonia taiwanensis (strain LMG 19424)), this protein is Beta-ketoacyl-[acyl-carrier-protein] synthase III.